A 143-amino-acid polypeptide reads, in one-letter code: Holo-[acyl-carrier-protein] synthase (143 aa).

Residues D9 and E63 each coordinate Mg(2+).

Belongs to the P-Pant transferase superfamily. AcpS family. It depends on Mg(2+) as a cofactor.

The protein resides in the cytoplasm. The enzyme catalyses apo-[ACP] + CoA = holo-[ACP] + adenosine 3',5'-bisphosphate + H(+). Functionally, transfers the 4'-phosphopantetheine moiety from coenzyme A to a Ser of acyl-carrier-protein. This Burkholderia pseudomallei (strain 1106a) protein is Holo-[acyl-carrier-protein] synthase.